A 320-amino-acid polypeptide reads, in one-letter code: Acetyl-coenzyme A carboxylase carboxyl transferase subunit alpha (320 aa).

A CoA carboxyltransferase C-terminal domain is found at 34–288; that stretch reads RLEEALEAAR…GEALERVLAG (255 aa).

This sequence belongs to the AccA family. In terms of assembly, acetyl-CoA carboxylase is a heterohexamer composed of biotin carboxyl carrier protein (AccB), biotin carboxylase (AccC) and two subunits each of ACCase subunit alpha (AccA) and ACCase subunit beta (AccD).

Its subcellular location is the cytoplasm. The catalysed reaction is N(6)-carboxybiotinyl-L-lysyl-[protein] + acetyl-CoA = N(6)-biotinyl-L-lysyl-[protein] + malonyl-CoA. Its pathway is lipid metabolism; malonyl-CoA biosynthesis; malonyl-CoA from acetyl-CoA: step 1/1. Its function is as follows. Component of the acetyl coenzyme A carboxylase (ACC) complex. First, biotin carboxylase catalyzes the carboxylation of biotin on its carrier protein (BCCP) and then the CO(2) group is transferred by the carboxyltransferase to acetyl-CoA to form malonyl-CoA. The polypeptide is Acetyl-coenzyme A carboxylase carboxyl transferase subunit alpha (Rubrobacter xylanophilus (strain DSM 9941 / JCM 11954 / NBRC 16129 / PRD-1)).